The following is a 290-amino-acid chain: Glycine--tRNA ligase alpha subunit (290 aa).

This sequence belongs to the class-II aminoacyl-tRNA synthetase family. In terms of assembly, tetramer of two alpha and two beta subunits.

The protein localises to the cytoplasm. It catalyses the reaction tRNA(Gly) + glycine + ATP = glycyl-tRNA(Gly) + AMP + diphosphate. In Nitratiruptor sp. (strain SB155-2), this protein is Glycine--tRNA ligase alpha subunit.